We begin with the raw amino-acid sequence, 83 residues long: Kappa-actitoxin-Aer3a (83 aa).

An N-terminal signal peptide occupies residues 1-22 (MKGQMIICLVLIALCMSVVVMA). Residues 23-49 (QNLRAEELEKANPKDERVRSFERNQKR) constitute a propeptide that is removed on maturation. A ShKT domain is found at 51–83 (CKDYLPKSECTQFRCRTSMKYKYTNCKKTCGTC). 3 disulfides stabilise this stretch: Cys51–Cys83, Cys60–Cys76, and Cys65–Cys80.

It belongs to the sea anemone type 1 potassium channel toxin family. Type 1a subfamily.

Its subcellular location is the secreted. The protein resides in the nematocyst. Specifically, dose-dependently and potently blocks the voltage-gated potassium channel Kv1.1/KCNA1 (Ki=1.6 pM). Moderately blocks potassium channel heterotetramers formed by 3 subunits of Kv1.1/KCNA1 and 1 subunit of Kv1.2/KCNA2 (Ki=56 nM) and weakly blocks those formed by 2 subunits of Kv1.1/KCNA1 and 2 subunits of Kv1.2/KCNA2 (Ki=14 nM). The polypeptide is Kappa-actitoxin-Aer3a (Anemonia erythraea (Sea anemone)).